The following is a 257-amino-acid chain: Hydroxyacylglutathione hydrolase (257 aa).

Positions 54, 56, 58, 59, 113, 137, and 175 each coordinate Zn(2+).

It belongs to the metallo-beta-lactamase superfamily. Glyoxalase II family. Monomer. Zn(2+) serves as cofactor.

It carries out the reaction an S-(2-hydroxyacyl)glutathione + H2O = a 2-hydroxy carboxylate + glutathione + H(+). It functions in the pathway secondary metabolite metabolism; methylglyoxal degradation; (R)-lactate from methylglyoxal: step 2/2. Functionally, thiolesterase that catalyzes the hydrolysis of S-D-lactoyl-glutathione to form glutathione and D-lactic acid. In Crocosphaera subtropica (strain ATCC 51142 / BH68) (Cyanothece sp. (strain ATCC 51142)), this protein is Hydroxyacylglutathione hydrolase.